Reading from the N-terminus, the 704-residue chain is Ankyrin repeat and LEM domain-containing protein 1 homolog (704 aa).

Positions 1–29 (MPPNGAITTTPRSRMPPTTPSSGKSRPKK) are disordered. The span at 8-22 (TTTPRSRMPPTTPSS) shows a compositional bias: low complexity. ANK repeat units lie at residues 28 to 59 (KKET…NVNA) and 63 to 93 (DGAT…PMSA). 3 disordered regions span residues 247–293 (NEDV…SQET), 314–358 (NAGL…ANTT), and 381–421 (SKSA…TTVD). Basic residues predominate over residues 276 to 288 (RKQRTPVNHHKRS). Low complexity-rich tracts occupy residues 329-346 (EPAI…TPKT) and 384-405 (AKSS…SFSS). Residues 425 to 470 (IRKIRRLREGELKSELKKFGISPAGPLDARTRRLYEKKLLIERRKI) enclose the LEM domain. The region spanning 525 to 635 (YNAFCYLIMD…AVKLKNLRNK (111 aa)) is the GIY-YIG domain.

Post-translationally, phosphorylated. Phosphorylated during telophase when localized at the midbody.

It is found in the cytoplasm. It localises to the nucleus. Its subcellular location is the chromosome. The protein resides in the midbody. The protein localises to the cytoskeleton. It is found in the spindle. With respect to regulation, inhibited by EDTA. Endonuclease which, in association with baf-1, plays an essential role during embryogenesis in the DNA repair response following DNA damage probably by ensuring proper chromosome segregation. Also required during postembryonic cell divisions after DNA damage caused by ionizing radiation to ensure normal cell proliferation. Resolves chromatin bridges in late mitosis that result from incomplete DNA replication, defective chromosome condensation or unresolved recombination intermediates. Together with brc-1, contributes to genome integrity by resolving mitotic chromatin bridges that result from incomplete processing of DNA breaks. In parallel to the slx-1/mus-81 pathway, acts in processing early recombination intermediates in meiotic prophase I to prevent illegitimate recombination. Also involved in processing remaining, erroneous recombination intermediates that persist into the second meiotic division. The protein is Ankyrin repeat and LEM domain-containing protein 1 homolog of Caenorhabditis elegans.